We begin with the raw amino-acid sequence, 941 residues long: ATP-dependent 6-phosphofructokinase subunit beta (941 aa).

An N-terminal catalytic PFK domain 1 region spans residues 2–558 (PDASLFNGTS…HMKNFISTNS (557 aa)). ATP-binding positions include G191, 255–256 (RC), and 285–288 (GDGS). A Mg(2+)-binding site is contributed by D286. Residues 331–333 (SID), R368, 375–377 (MGR), E432, R460, and 466–469 (HVQR) each bind beta-D-fructose 6-phosphate. The Proton acceptor role is filled by D333. The tract at residues 559–572 (ADHVPPSLPLEKRK) is interdomain linker. A C-terminal regulatory PFK domain 2 region spans residues 573-941 (KVAIINVGAP…SDMLSGRTSL (369 aa)). Residues R643, 701-705 (TISNN), R739, 746-748 (QGG), E806, K832, 838-841 (HVQQ), and R918 each bind beta-D-fructose 2,6-bisphosphate.

Belongs to the phosphofructokinase type A (PFKA) family. ATP-dependent PFK group I subfamily. Eukaryotic two domain clade 'E' sub-subfamily. As to quaternary structure, heterododecamer of 4 alpha, 4 beta and 4 gamma chains. The gamma chain bridges the N-terminal halves of the alpha and beta subunits. It depends on Mg(2+) as a cofactor.

The protein localises to the cytoplasm. It catalyses the reaction beta-D-fructose 6-phosphate + ATP = beta-D-fructose 1,6-bisphosphate + ADP + H(+). It functions in the pathway carbohydrate degradation; glycolysis; D-glyceraldehyde 3-phosphate and glycerone phosphate from D-glucose: step 3/4. Allosterically activated by ADP, AMP, or fructose 2,6-bisphosphate, and allosterically inhibited by ATP or citrate. In terms of biological role, catalyzes the phosphorylation of D-fructose 6-phosphate to fructose 1,6-bisphosphate by ATP, the first committing step of glycolysis. This is ATP-dependent 6-phosphofructokinase subunit beta (PFK2) from Komagataella phaffii (strain GS115 / ATCC 20864) (Yeast).